A 393-amino-acid polypeptide reads, in one-letter code: Protein TsgA (393 aa).

Residues methionine 1–threonine 10 lie on the Cytoplasmic side of the membrane. The helical transmembrane segment at tryptophan 11–methionine 31 threads the bilayer. The Periplasmic segment spans residues glycine 32 to threonine 50. Residues phenylalanine 51–proline 71 traverse the membrane as a helical segment. At leucine 72 to arginine 77 the chain is on the cytoplasmic side. The chain crosses the membrane as a helical span at residues phenylalanine 78–leucine 98. Residues phenylalanine 99–serine 100 lie on the Periplasmic side of the membrane. Residues alanine 101–isoleucine 121 form a helical membrane-spanning segment. The Cytoplasmic segment spans residues threonine 122–arginine 133. Residues leucine 134–phenylalanine 154 traverse the membrane as a helical segment. Over leucine 155–glutamate 161 the chain is Periplasmic. The chain crosses the membrane as a helical span at residues tryptophan 162–glycine 182. Over cysteine 183–glycine 205 the chain is Cytoplasmic. Residues isoleucine 206 to isoleucine 226 form a helical membrane-spanning segment. Residues serine 227–glycine 244 are Periplasmic-facing. The helical transmembrane segment at alanine 245–leucine 265 threads the bilayer. Residues arginine 266–arginine 272 lie on the Cytoplasmic side of the membrane. The chain crosses the membrane as a helical span at residues isoleucine 273–glutamine 293. The Periplasmic portion of the chain corresponds to alanine 294–proline 297. The helical transmembrane segment at tryptophan 298–glycine 318 threads the bilayer. Residues serine 319–asparagine 331 lie on the Cytoplasmic side of the membrane. The chain crosses the membrane as a helical span at residues phenylalanine 332–valine 352. At alanine 353 to alanine 360 the chain is on the periplasmic side. Residues leucine 361–valine 381 traverse the membrane as a helical segment. At serine 382 to histidine 393 the chain is on the cytoplasmic side.

Belongs to the major facilitator superfamily. TsgA family.

Its subcellular location is the cell inner membrane. The protein is Protein TsgA of Salmonella choleraesuis (strain SC-B67).